We begin with the raw amino-acid sequence, 263 residues long: Undecaprenyl-diphosphatase 2 (263 aa).

A run of 8 helical transmembrane segments spans residues 17-37 (TEFLPVSSTGHMILTGHLIGF), 42-62 (AKVFEVVIQLGSILAVVVIFW), 83-103 (LHIIIGMIPAGVLGVLFHSAI), 106-126 (VLFGPGPVVISLVAGGILMIV), 142-162 (ITYKQAFTIGMFQCLALWPGF), 183-203 (AEYTFILAVPMMVAASGLDLI), 216-236 (LFATGFITAFVVAMLAIVSFL), and 242-262 (VKLTPFAYYRFILAAVFYFFI).

This sequence belongs to the UppP family.

It localises to the cell membrane. It carries out the reaction di-trans,octa-cis-undecaprenyl diphosphate + H2O = di-trans,octa-cis-undecaprenyl phosphate + phosphate + H(+). Its function is as follows. Catalyzes the dephosphorylation of undecaprenyl diphosphate (UPP). Confers resistance to bacitracin. The chain is Undecaprenyl-diphosphatase 2 from Bacillus anthracis.